Reading from the N-terminus, the 220-residue chain is Protein DGCR6L (220 aa).

A coiled-coil region spans residues 76-159 (KSLYNQRLRL…ADQQSTLEKA (84 aa)).

This sequence belongs to the gonadal family. Widely expressed in fetal and adult tissues. Highest expression in liver, heart and skeletal muscle. Lower levels in pancreas and placenta. Weak expression in brain.

Its subcellular location is the nucleus. In terms of biological role, may play a role in neural crest cell migration into the third and fourth pharyngeal pouches. The sequence is that of Protein DGCR6L (DGCR6L) from Homo sapiens (Human).